Here is a 119-residue protein sequence, read N- to C-terminus: MPAPVEIQQATLSKFIDAWKRWNADDFIGLWSDSFTFQVLPFSDGKPTRPRDMIAPMYRNFIETLTNYKAIFIAFSESGDKIERLEEVNDNAFRKEWDPKCHAYWGYGQPPKAKAVAGS.

It participates in pigment biosynthesis. In terms of biological role, part of the ergochrome gene cluster responsible for the typical purple-black color of the ergot sclerotia. The ergochrome gene cluster produces several ergot pigments including the yellow ergochrome secalonic acid and its derivatives, as well as the red anthraquinones endocrocin and clavorubin. The pathway begins with the synthesis of atrochrysone thioester by the polyketide synthase (PKS) CPUR_05437. The atrochrysone carboxyl ACP thioesterase CPUR_05436 then breaks the thioester bond and releases the atrochrysone carboxylic acid from CPUR_05437. The atrochrysone carboxylic acid is then converted to atrochrysone which is further transformed into emodin anthrone. The next step is performed by the anthrone oxygenase CPUR_05434 that catalyzes the oxidation of emodinanthrone to emodin. Emodin is further modified to yield monodictyphenone via several steps involving CPUR_05427, CPUR_05428, CPUR_05429 and CPUR_05430. The short chain dehydrogenase/reductase CPUR_05418 then catalyzes the C-5 ketoreduction to give the xanthone skeleton of the monomeric units. Ergochromes formation requires further dimerization steps of different xanthone units, probably catalyzed by the cytochrome P450 monooxygenase CPUR_05419. CPUR_05425, CPUR_05426 and CPUR_05431 are unique to Claviceps, thus it is likely that they are involved in further modification of xanthone units or in their dimerization. The yellow ergochromes and the red anthraquinone pigments endocrocin and clavorubin are products from the same PKS derived precursors and the latter are likely shunt products in the pathway of xanthone biosynthesis. It is proposed that atrochrysone carboxylic acid released from the PKS CPUR_05437 can also be converted to endocrocin anthrone which is further oxidized into endocrocin by CPUR_05435. Endocrocin could be then modified to clavorubin, possibly by CPUR_05423 and CPUR_05431. Clavorubin is the principal anthraquinone metabolite produced by the cluster with a much higher yield compared to endocrocin. The chain is Ergochrome gene cluster protein CPUR_05426 from Claviceps purpurea (strain 20.1) (Ergot fungus).